We begin with the raw amino-acid sequence, 536 residues long: MSKFVFVTGGVVSSIGKGIVAASLGRLLKSRGYSVSILKLDPYLNVDPGTMSPFQHGEVFVTEDGAETDLDLGHYERFTDTAMTRLNSVTTGSIYQAVINKERRGSYNGGTVQVIPHITREIRERIHRVASNSNADIIITEIGGTVGDIESLPFLEAIREFKNDVNRNDVAYIHVTLLPYIKTSGEIKTKPTQHSVKELRSIGIQPDLLVCRSDKSINEGLKKKLSGFCGVNINSVIEALDADSIYSVPLSLKKEGLCKETLKYLELEDKECDLKNWEKLVHNLRNPGTPIKVALVGKYIELGDAYLSVVEALRHACIEQKALLDLHWVSAEMIEKDSAETYLNEVDAIVVPGGFGNRGVNGKISAIKFARENKIPFLGLCLGMQCAVIEWARNVANLPDASSSELDPKTPNPVIHLLPEQEDVVDLGGTMRLGVYPCRLTNNTIGKKLYDEDVIYERHRHRYEFNNYYKQSFLNSGYKISGTSPDGRLVELIELDNHPYFLACQYHPEFLSRPGKPHPLFKGLIKSSQENLTQSN.

The amidoligase domain stretch occupies residues 1–267 (MSKFVFVTGG…CKETLKYLEL (267 aa)). Residue serine 13 participates in CTP binding. Serine 13 provides a ligand contact to UTP. ATP contacts are provided by residues 14–19 (SIGKGI) and aspartate 71. The Mg(2+) site is built by aspartate 71 and glutamate 141. Residues 148–150 (DIE), 188–193 (KTKPTQ), and lysine 224 each bind CTP. UTP is bound by residues 188-193 (KTKPTQ) and lysine 224. Residues 292-534 (KVALVGKYIE…IKSSQENLTQ (243 aa)) enclose the Glutamine amidotransferase type-1 domain. Residue glycine 354 participates in L-glutamine binding. Cysteine 381 (nucleophile; for glutamine hydrolysis) is an active-site residue. Residues 382–385 (LGMQ), glutamate 405, and arginine 462 each bind L-glutamine. Catalysis depends on residues histidine 507 and glutamate 509.

This sequence belongs to the CTP synthase family. Homotetramer.

The enzyme catalyses UTP + L-glutamine + ATP + H2O = CTP + L-glutamate + ADP + phosphate + 2 H(+). It carries out the reaction L-glutamine + H2O = L-glutamate + NH4(+). The catalysed reaction is UTP + NH4(+) + ATP = CTP + ADP + phosphate + 2 H(+). Its pathway is pyrimidine metabolism; CTP biosynthesis via de novo pathway; CTP from UDP: step 2/2. Its activity is regulated as follows. Allosterically activated by GTP, when glutamine is the substrate; GTP has no effect on the reaction when ammonia is the substrate. The allosteric effector GTP functions by stabilizing the protein conformation that binds the tetrahedral intermediate(s) formed during glutamine hydrolysis. Inhibited by the product CTP, via allosteric rather than competitive inhibition. Functionally, catalyzes the ATP-dependent amination of UTP to CTP with either L-glutamine or ammonia as the source of nitrogen. Regulates intracellular CTP levels through interactions with the four ribonucleotide triphosphates. The protein is CTP synthase of Prochlorococcus marinus (strain MIT 9312).